The chain runs to 176 residues: Late lactation protein (176 aa).

Residues 1–18 (MKVLFFTIALSLFSILHA) form the signal peptide. Cys-78 and Cys-171 form a disulfide bridge.

Belongs to the calycin superfamily. Lipocalin family. As to expression, mammary gland. Secreted in milk.

The protein localises to the secreted. Functionally, probably serves a role in the transport of a small ligand released during the hydrolysis of milk fat. This is Late lactation protein from Trichosurus vulpecula (Brush-tailed possum).